The sequence spans 161 residues: MNLNIKEIKQKINEWKNREWRWKGKGKIEIRFVCLIERAESFKELVDNLEIIICEYEKIKQLIEDKDIKEIAKLNLFCGNNVYEEMLKDILSSNKFISLTISFDENIAYVKYMERGKEEVVYLDGKSAYKALQILKNRYENILKKQISIIEDAIPLTIPSQ.

This is an uncharacterized protein from Methanocaldococcus jannaschii (strain ATCC 43067 / DSM 2661 / JAL-1 / JCM 10045 / NBRC 100440) (Methanococcus jannaschii).